The primary structure comprises 185 residues: Elongation factor P (185 aa).

This sequence belongs to the elongation factor P family.

Its subcellular location is the cytoplasm. It functions in the pathway protein biosynthesis; polypeptide chain elongation. Involved in peptide bond synthesis. Stimulates efficient translation and peptide-bond synthesis on native or reconstituted 70S ribosomes in vitro. Probably functions indirectly by altering the affinity of the ribosome for aminoacyl-tRNA, thus increasing their reactivity as acceptors for peptidyl transferase. This is Elongation factor P from Staphylococcus saprophyticus subsp. saprophyticus (strain ATCC 15305 / DSM 20229 / NCIMB 8711 / NCTC 7292 / S-41).